Consider the following 25-residue polypeptide: Inorganic pyrophosphatase (25 aa).

In terms of assembly, monomer. It depends on Mg(2+) as a cofactor.

The enzyme catalyses diphosphate + H2O = 2 phosphate + H(+). This Cyanophora paradoxa protein is Inorganic pyrophosphatase.